A 444-amino-acid chain; its full sequence is Serine--tRNA ligase (444 aa).

Residue 243 to 245 (TAE) participates in L-serine binding. 274 to 276 (RSE) contributes to the ATP binding site. L-serine is bound at residue Glu297. 361 to 364 (EISS) lines the ATP pocket. Ser397 contributes to the L-serine binding site.

This sequence belongs to the class-II aminoacyl-tRNA synthetase family. Type-1 seryl-tRNA synthetase subfamily. As to quaternary structure, homodimer. The tRNA molecule binds across the dimer.

It is found in the cytoplasm. The enzyme catalyses tRNA(Ser) + L-serine + ATP = L-seryl-tRNA(Ser) + AMP + diphosphate + H(+). It carries out the reaction tRNA(Sec) + L-serine + ATP = L-seryl-tRNA(Sec) + AMP + diphosphate + H(+). It participates in aminoacyl-tRNA biosynthesis; selenocysteinyl-tRNA(Sec) biosynthesis; L-seryl-tRNA(Sec) from L-serine and tRNA(Sec): step 1/1. Functionally, catalyzes the attachment of serine to tRNA(Ser). Is also able to aminoacylate tRNA(Sec) with serine, to form the misacylated tRNA L-seryl-tRNA(Sec), which will be further converted into selenocysteinyl-tRNA(Sec). The polypeptide is Serine--tRNA ligase (Acidobacterium capsulatum (strain ATCC 51196 / DSM 11244 / BCRC 80197 / JCM 7670 / NBRC 15755 / NCIMB 13165 / 161)).